The primary structure comprises 550 residues: Probable importin subunit alpha-A (550 aa).

The span at 1–30 (MSSRDKQDSRKKEFKKSLDSETARRKREEN) shows a compositional bias: basic and acidic residues. Residues 1–34 (MSSRDKQDSRKKEFKKSLDSETARRKREENSIGI) are disordered. Residues 1-56 (MSSRDKQDSRKKEFKKSLDSETARRKREENSIGIRKNAREELMLKRRGIVQPNPST) enclose the IBB domain. ARM repeat units lie at residues 116 to 155 (YPPI…NIAS), 158 to 198 (NRQT…NIAG), 201 to 241 (VDSR…KIGL), 256 to 297 (KPQP…YLCD), 300 to 339 (NTKI…NIVT), 342 to 381 (SSQT…NITA), 385 to 424 (SQID…NSTN), and 428 to 467 (TKSI…NIIK).

The protein belongs to the importin alpha family. Forms a complex with tnpo/importin subunit beta.

It localises to the cytoplasm. It is found in the nucleus envelope. In terms of biological role, functions in nuclear protein import via a substrate-importin alpha-beta transport complex that passes though the nuclear pore complexes (NPC). Binds specifically and directly to substrates containing either a simple or bipartite NLS motif. This is Probable importin subunit alpha-A from Dictyostelium discoideum (Social amoeba).